The sequence spans 677 residues: DNA-directed RNA polymerase subunit beta' (677 aa).

Zn(2+) is bound by residues C69, C71, C87, and C90. The Mg(2+) site is built by D489, D491, and D493.

It belongs to the RNA polymerase beta' chain family. RpoC1 subfamily. In plastids the minimal PEP RNA polymerase catalytic core is composed of four subunits: alpha, beta, beta', and beta''. When a (nuclear-encoded) sigma factor is associated with the core the holoenzyme is formed, which can initiate transcription. It depends on Mg(2+) as a cofactor. Zn(2+) is required as a cofactor.

Its subcellular location is the plastid. The protein localises to the chloroplast. The enzyme catalyses RNA(n) + a ribonucleoside 5'-triphosphate = RNA(n+1) + diphosphate. In terms of biological role, DNA-dependent RNA polymerase catalyzes the transcription of DNA into RNA using the four ribonucleoside triphosphates as substrates. The polypeptide is DNA-directed RNA polymerase subunit beta' (Daucus carota (Wild carrot)).